Reading from the N-terminus, the 127-residue chain is Holo-[acyl-carrier-protein] synthase (127 aa).

2 residues coordinate Mg(2+): aspartate 7 and glutamate 56.

The protein belongs to the P-Pant transferase superfamily. AcpS family. It depends on Mg(2+) as a cofactor.

It localises to the cytoplasm. The enzyme catalyses apo-[ACP] + CoA = holo-[ACP] + adenosine 3',5'-bisphosphate + H(+). Transfers the 4'-phosphopantetheine moiety from coenzyme A to a Ser of acyl-carrier-protein. This chain is Holo-[acyl-carrier-protein] synthase, found in Onion yellows phytoplasma (strain OY-M).